A 285-amino-acid chain; its full sequence is Protease HtpX homolog (285 aa).

The next 2 membrane-spanning stretches (helical) occupy residues 7 to 27 (TAMLMAAITALFIVIGGMIGG) and 30 to 50 (GMTIALLIALGMNFFSYWFSD). Residue histidine 131 participates in Zn(2+) binding. Residue glutamate 132 is part of the active site. Residue histidine 135 participates in Zn(2+) binding. The next 2 helical transmembrane spans lie at 146 to 166 (ISATMAGAISALANFAMFFGG) and 177 to 197 (IAGIAVALLAPIAGALIQMAI). Glutamate 202 is a Zn(2+) binding site.

The protein belongs to the peptidase M48B family. Zn(2+) serves as cofactor.

It is found in the cell inner membrane. The chain is Protease HtpX homolog from Burkholderia thailandensis (strain ATCC 700388 / DSM 13276 / CCUG 48851 / CIP 106301 / E264).